The following is a 590-amino-acid chain: MGTRPRGVVLAPWAVVLVLVLALRLAGASHVIHRSLEAEAAPSVPASIVSPLLRTGYHFQPPMNWINDPNAPLYYKGWYHLFYQYNPKGAVWGNIVWAHSVSRDLINWVALEPAIYPSIPSDKYGCWSGSATILEDGTPAILYTGIDRADINYQVQVLALPKDASDPLLREWEKPEEYNPVATPAAGGINATQFRDPTTAWRHAGHWRMLVGSVRGARGMALVYRSRDFRKWTKAKHPLHSAALTGMWECPDFFPVSGPGLQAGLDTSAPGTKYVLKSSLDLTRYDYYTIGSYDGGKDRYYPDDPAGDYHHRRRYDYGNYYASKTFYDPVERRRVLLGWANESDSVPDDKAKGWAGIHAIPRKIWLDPTGKQLLQWPIHEVEKLRGKAVSVDAKLVKPGDHFEVTGIATYQADVEVSFELELEAGTSLLEKAEAFDPAYDDDAQKLCGVKGADARGGVGPFGLWVLASADLQERTAVFFRVFRDGHGKPKVLMCTDPTKSSLSPDLYKPTFAGFVDADISSGKITLRSLIDRSVVESFGAGGKTCILSRVYPSIAVGKDAHLYVFNNGEVDVTVSGLTAWEMKKPLMNGA.

A signal peptide spans 1-28; that stretch reads MGTRPRGVVLAPWAVVLVLVLALRLAGA. Residue Asp68 is part of the active site. Asn190 and Asn341 each carry an N-linked (GlcNAc...) asparagine glycan.

This sequence belongs to the glycosyl hydrolase 32 family.

It is found in the secreted. Its subcellular location is the cell wall. The catalysed reaction is Hydrolysis of terminal non-reducing beta-D-fructofuranoside residues in beta-D-fructofuranosides.. This Zea mays (Maize) protein is Beta-fructofuranosidase, cell wall isozyme.